The chain runs to 97 residues: Sm-like protein LSM3A (97 aa).

The residue at position 2 (S2) is an N-acetylserine. The Sm domain occupies 11 to 96; the sequence is EPLDLIRLSI…VILVSPPLRT (86 aa).

Belongs to the snRNP Sm proteins family. As to quaternary structure, component of the heptameric LSM1-LSM7 complex that forms a seven-membered ring structure with a donut shape. The LSM subunits are arranged in the order LSM1, LSM2, LSM3, LSM6, LSM5, LSM7 and LSM4. Component of the heptameric LSM2-LSM8 complex that forms a seven-membered ring structure with a donut shape. The LSM subunits are arranged in the order LSM8, LSM2, LSM3, LSM6, LSM5, LSM7 and LSM4. LSM3A subunit interacts only with its two neighboring subunits, LSM2 and LSM6A or LSM6B. Expressed in roots, leaves, stems, flowers and siliques.

The protein localises to the cytoplasm. It is found in the nucleus. Component of LSM protein complexes, which are involved in RNA processing. Component of the cytoplasmic LSM1-LSM7 complex which is involved in mRNA degradation by promoting decapping and leading to accurate 5'-3' mRNA decay. The cytoplasmic LSM1-LSM7 complex regulates developmental gene expression by the decapping of specific development-related transcripts. Component of the nuclear LSM2-LSM8 complex which is involved splicing nuclear mRNAs. LSM2-LSM8 binds directly to the U6 small nuclear RNAs (snRNAs) and is essential for accurate splicing of selected development-related mRNAs through the stabilization of the spliceosomal U6 snRNA. Plays a critical role in the regulation of development-related gene expression. In Arabidopsis thaliana (Mouse-ear cress), this protein is Sm-like protein LSM3A.